A 308-amino-acid polypeptide reads, in one-letter code: Protein translocase subunit SecF (308 aa).

6 consecutive transmembrane segments (helical) span residues 12-32 (YFIF…TKGF), 127-147 (AKNA…YITI), 152-172 (IYAL…IGFI), 182-202 (PFIA…IVIF), 234-254 (VYTS…GGST), and 262-282 (LLVG…PLVY).

It belongs to the SecD/SecF family. SecF subfamily. As to quaternary structure, forms a complex with SecD. Part of the essential Sec protein translocation apparatus which comprises SecA, SecYEG and auxiliary proteins SecDF. Other proteins may also be involved.

The protein localises to the cell inner membrane. In terms of biological role, part of the Sec protein translocase complex. Interacts with the SecYEG preprotein conducting channel. SecDF uses the proton motive force (PMF) to complete protein translocation after the ATP-dependent function of SecA. This chain is Protein translocase subunit SecF, found in Sebaldella termitidis (strain ATCC 33386 / NCTC 11300).